Consider the following 86-residue polypeptide: Serine protease inhibitor Kazal-type 2 (86 aa).

The signal sequence occupies residues 1–16 (MLRLVLLLLVTDFAAS). Positions 32-86 (QFRTPDCGHFDFPACPRNLNPVCGTDMNTYSNECTLCMKIREDGSHINIIKDEPC) constitute a Kazal-like domain. 3 disulfides stabilise this stretch: cysteine 38-cysteine 68, cysteine 46-cysteine 65, and cysteine 54-cysteine 86.

In terms of tissue distribution, expressed in sperm (at protein level). Expressed in testis but not in ovary, brain, heart, kidney or lung. Within testis, expressed in epididymis and germ cells.

Its subcellular location is the secreted. The protein localises to the cytoplasmic vesicle. It localises to the secretory vesicle. It is found in the acrosome. As a strong inhibitor of acrosin, it is required for normal spermiogenesis. It probably hinders premature activation of proacrosin and other proteases, thus preventing the cascade of events leading to spermiogenesis defects. May be involved in the regulation of serine protease-dependent germ cell apoptosis. It also inhibits trypsin. The protein is Serine protease inhibitor Kazal-type 2 (Spink2) of Mus musculus (Mouse).